We begin with the raw amino-acid sequence, 209 residues long: UPF0174 protein HP_1587 (209 aa).

Belongs to the UPF0174 family.

This is UPF0174 protein HP_1587 from Helicobacter pylori (strain ATCC 700392 / 26695) (Campylobacter pylori).